The sequence spans 32 residues: MSDINATRLPAWLVDCPCVGDDINRLLTRGEK.

The propeptide occupies 1 to 10 (MSDINATRLP). Residues 11–17 (AWLVDCP) constitute a cross-link (cyclopeptide (Ala-Pro)). The segment at residues 12-16 (WLVDC) is a cross-link (2'-cysteinyl-6'-hydroxytryptophan sulfoxide (Trp-Cys)). Residues 18-32 (CVGDDINRLLTRGEK) constitute a propeptide that is removed on maturation.

This sequence belongs to the MSDIN fungal toxin family. In terms of processing, processed by the macrocyclase-peptidase enzyme POPB to yield a toxic cyclic heptapeptide. POPB first removes 10 residues from the N-terminus. Conformational trapping of the remaining peptide forces the enzyme to release this intermediate rather than proceed to macrocyclization. The enzyme rebinds the remaining peptide in a different conformation and catalyzes macrocyclization of the N-terminal 7 residues.

Its function is as follows. Major toxin that belongs to the bicyclic heptapeptides called phallotoxins. Although structurally related to amatoxins, phallotoxins have a different mode of action, which is the stabilization of F-actin. Phallotoxins are poisonous when administered parenterally, but not orally because of poor absorption. This chain is Phallacidin proprotein, found in Amanita pallidorosea.